A 558-amino-acid chain; its full sequence is MRASKFFYKTLREDPKDAEATSHKLLIRASMIKQIASGVYAFLPFGHKVLKKIETVVREEMDRIGGQEMTMSIMMPAEMWKKTGRWELYGDDMIKFKDRKEQDFCLGPTHEEQITTLAGQLISSYKQLPQLVYQIQTKFRDEPRPRFGLIRLREFVMKDAYSFHDSEESLKTTYDQVLNAYKRILERIGLNYEVVAADPGQIGGTLSHEFIVPAEVGESTVFKCDSCGYVATSEVATSVLPAPAFLEKPALEKVHTPDTSSIEDVAEFLQLSKERIIKAVMVIGDSRPYMILVRGDRELDESKMNRRFTQWRMMTDEEILSMGFIPGFVGPREGINEITILKDKSLESLDWGVIGANERDYHIVGVEVSELPFHEIVDLAEVAEGDLCPQCGSPLRSFTGLEVGHIFRLGTRYSEPLEAFYHSEDGERKPFIMGCYGIGVTRLVSAVIEQHHDDFGIVWPWSVAPYHVVIIPIGDVEAQVQELENTLSSAGLDVFVDDRDERPGVKFVDADLIGFPVRLVVNAKKEGKVEIKFRKTGETLLVGQEDVLDTVLRGAVNL.

It belongs to the class-II aminoacyl-tRNA synthetase family. ProS type 1 subfamily. Homodimer.

It localises to the cytoplasm. The catalysed reaction is tRNA(Pro) + L-proline + ATP = L-prolyl-tRNA(Pro) + AMP + diphosphate. In terms of biological role, catalyzes the attachment of proline to tRNA(Pro) in a two-step reaction: proline is first activated by ATP to form Pro-AMP and then transferred to the acceptor end of tRNA(Pro). As ProRS can inadvertently accommodate and process non-cognate amino acids such as alanine and cysteine, to avoid such errors it has two additional distinct editing activities against alanine. One activity is designated as 'pretransfer' editing and involves the tRNA(Pro)-independent hydrolysis of activated Ala-AMP. The other activity is designated 'posttransfer' editing and involves deacylation of mischarged Ala-tRNA(Pro). The misacylated Cys-tRNA(Pro) is not edited by ProRS. In Coprothermobacter proteolyticus (strain ATCC 35245 / DSM 5265 / OCM 4 / BT), this protein is Proline--tRNA ligase.